A 137-amino-acid chain; its full sequence is Small ribosomal subunit protein eS6 (137 aa).

The span at 114-127 (LPVEEAPAEDAPES) shows a compositional bias: acidic residues. The interval 114 to 137 (LPVEEAPAEDAPESAEEKSEDKKE) is disordered. Positions 128-137 (AEEKSEDKKE) are enriched in basic and acidic residues.

It belongs to the eukaryotic ribosomal protein eS6 family.

In Nitrosopumilus maritimus (strain SCM1), this protein is Small ribosomal subunit protein eS6.